The primary structure comprises 166 residues: Phosphopantetheine adenylyltransferase (166 aa).

Thr-14 is a substrate binding site. ATP contacts are provided by residues 14–15 (TF) and His-22. 3 residues coordinate substrate: Lys-46, Leu-78, and Arg-92. Residues 93–95 (GLR), Glu-103, and 128–134 (WMYLSSS) each bind ATP.

The protein belongs to the bacterial CoaD family. Homohexamer. Mg(2+) serves as cofactor.

Its subcellular location is the cytoplasm. It catalyses the reaction (R)-4'-phosphopantetheine + ATP + H(+) = 3'-dephospho-CoA + diphosphate. It functions in the pathway cofactor biosynthesis; coenzyme A biosynthesis; CoA from (R)-pantothenate: step 4/5. Its function is as follows. Reversibly transfers an adenylyl group from ATP to 4'-phosphopantetheine, yielding dephospho-CoA (dPCoA) and pyrophosphate. This is Phosphopantetheine adenylyltransferase from Maridesulfovibrio salexigens (strain ATCC 14822 / DSM 2638 / NCIMB 8403 / VKM B-1763) (Desulfovibrio salexigens).